The chain runs to 314 residues: DNA-directed RNA polymerase subunit alpha (314 aa).

Residues 1-227 are alpha N-terminal domain (alpha-NTD); it reads MTKFEIECVE…ELLHPLKEIN (227 aa). Residues 241 to 314 form an alpha C-terminal domain (alpha-CTD) region; that stretch reads KINQILIEEL…LPKEKTVKPN (74 aa).

It belongs to the RNA polymerase alpha chain family. In plastids the minimal PEP RNA polymerase catalytic core is composed of four subunits: alpha, beta, beta', and beta''. When a (nuclear-encoded) sigma factor is associated with the core the holoenzyme is formed, which can initiate transcription.

The protein localises to the plastid. It localises to the chloroplast. It catalyses the reaction RNA(n) + a ribonucleoside 5'-triphosphate = RNA(n+1) + diphosphate. In terms of biological role, DNA-dependent RNA polymerase catalyzes the transcription of DNA into RNA using the four ribonucleoside triphosphates as substrates. This Rhodomonas salina (Cryptomonas salina) protein is DNA-directed RNA polymerase subunit alpha.